A 782-amino-acid chain; its full sequence is Semaphorin-3G (782 aa).

Residues 1–22 (MAPSAWAICWLLGGLLLHGGSS) form the signal peptide. One can recognise a Sema domain in the interval 32–519 (RLRLSYRDLL…SRLGVAQLRL (488 aa)). N-linked (GlcNAc...) asparagine glycosylation occurs at N44. Cysteines 105 and 116 form a disulfide. A glycan (N-linked (GlcNAc...) asparagine) is linked at N127. 5 disulfide bridges follow: C134–C143, C270–C382, C294–C342, C522–C540, and C603–C655. An Ig-like C2-type domain is found at 569 to 671 (PALQCLGQSQ…FSQTVVRLAL (103 aa)).

Belongs to the semaphorin family.

It is found in the secreted. Functionally, has chemorepulsive activities for sympathetic axons. Ligand of NRP2. The polypeptide is Semaphorin-3G (SEMA3G) (Homo sapiens (Human)).